The chain runs to 1085 residues: Carbamoyl phosphate synthase large chain (1085 aa).

A carboxyphosphate synthetic domain region spans residues 1-399 (MPKRTDISNI…ALQKALCSLE (399 aa)). Residues arginine 127, arginine 167, glycine 174, glutamate 206, leucine 208, glutamate 213, glycine 239, valine 240, histidine 241, glutamine 283, and glutamate 297 each contribute to the ATP site. In terms of domain architecture, ATP-grasp 1 spans 131 to 326 (KEAMLKIGMD…IAKVATMLAV (196 aa)). Positions 283, 297, and 299 each coordinate Mg(2+). Glutamine 283, glutamate 297, and asparagine 299 together coordinate Mn(2+). The interval 400 to 551 (NNWLGFESLS…YAPNPLPPIG (152 aa)) is oligomerization domain. Positions 552-951 (NKQEKQEKKI…AFFKAQTACF (400 aa)) are carbamoyl phosphate synthetic domain. The ATP-grasp 2 domain maps to 678 to 871 (SLFLKELDIK…LAKVATRVMV (194 aa)). The ATP site is built by arginine 714, lysine 756, leucine 758, glutamate 763, glycine 788, isoleucine 789, histidine 790, serine 791, glutamine 830, and glutamate 842. Mg(2+) contacts are provided by glutamine 830, glutamate 842, and asparagine 844. Residues glutamine 830, glutamate 842, and asparagine 844 each contribute to the Mn(2+) site. The 134-residue stretch at 952-1085 (NPIKNKGLIF…ELLALQDYLK (134 aa)) folds into the MGS-like domain. Residues 952 to 1085 (NPIKNKGLIF…ELLALQDYLK (134 aa)) form an allosteric domain region.

The protein belongs to the CarB family. Composed of two chains; the small (or glutamine) chain promotes the hydrolysis of glutamine to ammonia, which is used by the large (or ammonia) chain to synthesize carbamoyl phosphate. Tetramer of heterodimers (alpha,beta)4. Mg(2+) serves as cofactor. Mn(2+) is required as a cofactor.

It carries out the reaction hydrogencarbonate + L-glutamine + 2 ATP + H2O = carbamoyl phosphate + L-glutamate + 2 ADP + phosphate + 2 H(+). The enzyme catalyses hydrogencarbonate + NH4(+) + 2 ATP = carbamoyl phosphate + 2 ADP + phosphate + 2 H(+). It participates in amino-acid biosynthesis; L-arginine biosynthesis; carbamoyl phosphate from bicarbonate: step 1/1. It functions in the pathway pyrimidine metabolism; UMP biosynthesis via de novo pathway; (S)-dihydroorotate from bicarbonate: step 1/3. Large subunit of the glutamine-dependent carbamoyl phosphate synthetase (CPSase). CPSase catalyzes the formation of carbamoyl phosphate from the ammonia moiety of glutamine, carbonate, and phosphate donated by ATP, constituting the first step of 2 biosynthetic pathways, one leading to arginine and/or urea and the other to pyrimidine nucleotides. The large subunit (synthetase) binds the substrates ammonia (free or transferred from glutamine from the small subunit), hydrogencarbonate and ATP and carries out an ATP-coupled ligase reaction, activating hydrogencarbonate by forming carboxy phosphate which reacts with ammonia to form carbamoyl phosphate. The protein is Carbamoyl phosphate synthase large chain of Helicobacter pylori (strain J99 / ATCC 700824) (Campylobacter pylori J99).